Consider the following 411-residue polypeptide: Imidazolonepropionase (411 aa).

2 residues coordinate Fe(3+): histidine 78 and histidine 80. The Zn(2+) site is built by histidine 78 and histidine 80. Positions 87, 150, and 183 each coordinate 4-imidazolone-5-propanoate. Tyrosine 150 is a binding site for N-formimidoyl-L-glutamate. Histidine 248 lines the Fe(3+) pocket. Histidine 248 contributes to the Zn(2+) binding site. Residue glutamine 251 participates in 4-imidazolone-5-propanoate binding. Position 322 (aspartate 322) interacts with Fe(3+). Aspartate 322 contributes to the Zn(2+) binding site. Residues asparagine 324 and glycine 326 each coordinate N-formimidoyl-L-glutamate. Residue serine 327 coordinates 4-imidazolone-5-propanoate.

It belongs to the metallo-dependent hydrolases superfamily. HutI family. The cofactor is Zn(2+). Fe(3+) is required as a cofactor.

It localises to the cytoplasm. It catalyses the reaction 4-imidazolone-5-propanoate + H2O = N-formimidoyl-L-glutamate. The protein operates within amino-acid degradation; L-histidine degradation into L-glutamate; N-formimidoyl-L-glutamate from L-histidine: step 3/3. Functionally, catalyzes the hydrolytic cleavage of the carbon-nitrogen bond in imidazolone-5-propanoate to yield N-formimidoyl-L-glutamate. It is the third step in the universal histidine degradation pathway. The polypeptide is Imidazolonepropionase (Flavobacterium johnsoniae (strain ATCC 17061 / DSM 2064 / JCM 8514 / BCRC 14874 / CCUG 350202 / NBRC 14942 / NCIMB 11054 / UW101) (Cytophaga johnsonae)).